A 132-amino-acid polypeptide reads, in one-letter code: Small ribosomal subunit protein uS8 (132 aa).

It belongs to the universal ribosomal protein uS8 family. Part of the 30S ribosomal subunit. Contacts proteins S5 and S12.

In terms of biological role, one of the primary rRNA binding proteins, it binds directly to 16S rRNA central domain where it helps coordinate assembly of the platform of the 30S subunit. In Ureaplasma urealyticum serovar 10 (strain ATCC 33699 / Western), this protein is Small ribosomal subunit protein uS8.